Reading from the N-terminus, the 259-residue chain is 5'-nucleotidase SurE (259 aa).

A divalent metal cation contacts are provided by Asp-8, Asp-9, Ser-40, and Asn-92.

This sequence belongs to the SurE nucleotidase family. Requires a divalent metal cation as cofactor.

It localises to the cytoplasm. The enzyme catalyses a ribonucleoside 5'-phosphate + H2O = a ribonucleoside + phosphate. In terms of biological role, nucleotidase that shows phosphatase activity on nucleoside 5'-monophosphates. This is 5'-nucleotidase SurE from Xanthomonas campestris pv. campestris (strain 8004).